We begin with the raw amino-acid sequence, 309 residues long: Taste receptor type 2 member 8 (309 aa).

Residues 1 to 7 are Extracellular-facing; that stretch reads MFSPADN. Residues 8-28 traverse the membrane as a helical segment; sequence IFIILITGEFILGILGNGYIA. Residues 29-50 are Cytoplasmic-facing; sequence LVNWIDWIKKKKISTVDYILTN. The helical transmembrane segment at 51–71 threads the bilayer; sequence LVIARICLISVMVVNGIVIVL. Residues 72 to 82 are Extracellular-facing; that stretch reads NPDVYTKNKQQ. A helical membrane pass occupies residues 83 to 103; it reads IVIFTFWTFANYLNMWITTCL. Residues 104–131 lie on the Cytoplasmic side of the membrane; the sequence is NVFYFLKIASSSHPLFLWLKWKIDMVVH. The chain crosses the membrane as a helical span at residues 132-152; it reads WILLGCFAISLLVSLIAAIVL. Over 153–184 the chain is Extracellular; that stretch reads SCDYRFHAIAKHKRNITEMFXVSKIPYFEPLT. A glycan (N-linked (GlcNAc...) asparagine) is linked at asparagine 167. The helical transmembrane segment at 185–205 threads the bilayer; that stretch reads LFNLFAIVPFIVSLISFFLLV. Topologically, residues 206–239 are cytoplasmic; it reads RSLWRHTKQIKLYATGSRDPSTEVHVRAIKTMTS. The chain crosses the membrane as a helical span at residues 240–260; sequence FIFFFFLYFISSILMTFSYLM. The Extracellular segment spans residues 261 to 266; the sequence is TKYKLA. A helical membrane pass occupies residues 267 to 287; that stretch reads VEFGEIAAILYPLGHSLILIV. Topologically, residues 288–309 are cytoplasmic; that stretch reads LNNKLRQIFVRMLTCRKIACVI.

Belongs to the G-protein coupled receptor T2R family.

It localises to the membrane. Functionally, receptor that may play a role in the perception of bitterness and is gustducin-linked. May play a role in sensing the chemical composition of the gastrointestinal content. The activity of this receptor may stimulate alpha gustducin, mediate PLC-beta-2 activation and lead to the gating of TRPM5. This chain is Taste receptor type 2 member 8 (TAS2R8), found in Pan troglodytes (Chimpanzee).